The primary structure comprises 374 residues: Chaperone protein DnaJ (374 aa).

In terms of domain architecture, J spans Cys-5–Gly-70. The CR-type zinc finger occupies Gly-130–Gln-207. The Zn(2+) site is built by Cys-143, Cys-146, Cys-159, Cys-162, Cys-181, Cys-184, Cys-195, and Cys-198. 4 CXXCXGXG motif repeats span residues Cys-143 to Gly-150, Cys-159 to Gly-166, Cys-181 to Gly-188, and Cys-195 to Gly-202.

It belongs to the DnaJ family. As to quaternary structure, homodimer. Requires Zn(2+) as cofactor.

The protein localises to the cytoplasm. Participates actively in the response to hyperosmotic and heat shock by preventing the aggregation of stress-denatured proteins and by disaggregating proteins, also in an autonomous, DnaK-independent fashion. Unfolded proteins bind initially to DnaJ; upon interaction with the DnaJ-bound protein, DnaK hydrolyzes its bound ATP, resulting in the formation of a stable complex. GrpE releases ADP from DnaK; ATP binding to DnaK triggers the release of the substrate protein, thus completing the reaction cycle. Several rounds of ATP-dependent interactions between DnaJ, DnaK and GrpE are required for fully efficient folding. Also involved, together with DnaK and GrpE, in the DNA replication of plasmids through activation of initiation proteins. The polypeptide is Chaperone protein DnaJ (Francisella philomiragia subsp. philomiragia (strain ATCC 25017 / CCUG 19701 / FSC 153 / O#319-036)).